The primary structure comprises 542 residues: Protein MGF 505-10R (542 aa).

The protein belongs to the asfivirus MGF 505 family.

Functionally, plays a role in virus cell tropism, and may be required for efficient virus replication in macrophages. This Ornithodoros (relapsing fever ticks) protein is Protein MGF 505-10R.